Consider the following 200-residue polypeptide: dITP/XTP pyrophosphatase (200 aa).

Ser16–Lys21 provides a ligand contact to substrate. Residues Glu46 and Asp75 each coordinate Mg(2+). Catalysis depends on Asp75, which acts as the Proton acceptor. Residues Ser76, Phe154–Asp157, Lys177, and His182–Arg183 contribute to the substrate site.

It belongs to the HAM1 NTPase family. Homodimer. The cofactor is Mg(2+).

The catalysed reaction is XTP + H2O = XMP + diphosphate + H(+). The enzyme catalyses dITP + H2O = dIMP + diphosphate + H(+). It catalyses the reaction ITP + H2O = IMP + diphosphate + H(+). Functionally, pyrophosphatase that catalyzes the hydrolysis of nucleoside triphosphates to their monophosphate derivatives, with a high preference for the non-canonical purine nucleotides XTP (xanthosine triphosphate), dITP (deoxyinosine triphosphate) and ITP. Seems to function as a house-cleaning enzyme that removes non-canonical purine nucleotides from the nucleotide pool, thus preventing their incorporation into DNA/RNA and avoiding chromosomal lesions. This chain is dITP/XTP pyrophosphatase, found in Prochlorococcus marinus (strain SARG / CCMP1375 / SS120).